The primary structure comprises 156 residues: ATP synthase subunit b (156 aa).

A helical membrane pass occupies residues 7 to 26; that stretch reads FIGQMVAFAIFIYLTYRYVW.

The protein belongs to the ATPase B chain family. In terms of assembly, F-type ATPases have 2 components, F(1) - the catalytic core - and F(0) - the membrane proton channel. F(1) has five subunits: alpha(3), beta(3), gamma(1), delta(1), epsilon(1). F(0) has three main subunits: a(1), b(2) and c(10-14). The alpha and beta chains form an alternating ring which encloses part of the gamma chain. F(1) is attached to F(0) by a central stalk formed by the gamma and epsilon chains, while a peripheral stalk is formed by the delta and b chains.

It is found in the cell inner membrane. In terms of biological role, f(1)F(0) ATP synthase produces ATP from ADP in the presence of a proton or sodium gradient. F-type ATPases consist of two structural domains, F(1) containing the extramembraneous catalytic core and F(0) containing the membrane proton channel, linked together by a central stalk and a peripheral stalk. During catalysis, ATP synthesis in the catalytic domain of F(1) is coupled via a rotary mechanism of the central stalk subunits to proton translocation. Functionally, component of the F(0) channel, it forms part of the peripheral stalk, linking F(1) to F(0). This chain is ATP synthase subunit b, found in Cellvibrio japonicus (strain Ueda107) (Pseudomonas fluorescens subsp. cellulosa).